The following is an 824-amino-acid chain: Leucine--tRNA ligase (824 aa).

Residues Pro42 to His52 carry the 'HIGH' region motif. Positions Lys581–Ser585 match the 'KMSKS' region motif. Lys584 serves as a coordination point for ATP.

The protein belongs to the class-I aminoacyl-tRNA synthetase family.

It is found in the cytoplasm. It catalyses the reaction tRNA(Leu) + L-leucine + ATP = L-leucyl-tRNA(Leu) + AMP + diphosphate. The sequence is that of Leucine--tRNA ligase from Syntrophomonas wolfei subsp. wolfei (strain DSM 2245B / Goettingen).